A 286-amino-acid polypeptide reads, in one-letter code: Interferon-induced 35 kDa protein (286 aa).

Residues 5 to 26 (LDAALHALQEEQARLKMRLWDL) form a leucine-zipper region. NID domains lie at 81 to 170 (ALIT…GDVD) and 183 to 266 (FARD…GEVE).

The protein belongs to the NMI family. Homodimer. Also interacts with BATF. Interacts with TRIM21. Interacts with NMI; the interaction is direct and is facilitated by TRIM21. In terms of processing, phosphorylated. Dephosphorylation correlates with the formation of a complex with NMI. Expressed in a wide range of cell types, including fibroblasts, macrophages, and epithelial cells.

The protein resides in the cytoplasm. The protein localises to the nucleus. It localises to the secreted. In terms of biological role, acts as a signaling pathway regulator involved in innate immune system response. In response to interferon IFN-alpha, associates in a complex with signaling pathway regulator NMI to regulate immune response; the complex formation prevents proteasome-mediated degradation of IFI35 and correlates with IFI35 dephosphorylation. In complex with NMI, inhibits virus-triggered type I interferon/IFN-beta production. In complex with NMI, negatively regulates nuclear factor NF-kappa-B signaling by inhibiting the nuclear translocation, activation and transcription of the NF-kappa-B subunit p65/RELA, resulting in the inhibition of endothelial cell proliferation, migration and re-endothelialization of injured arteries. Beside its role as an intracellular signaling pathway regulator, also functions extracellularly as damage-associated molecular patterns (DAMPs) to promote inflammation when actively released by macrophage to the extracellular space during cell injury and pathogen invasion. Macrophage-secreted IFI35 activates NF-kappa-B signaling in adjacent macrophages through Toll-like receptor 4/TLR4 activation, thereby inducing NF-kappa-B translocation from the cytoplasm into the nucleus which promotes the release of pro-inflammatory cytokines. This is Interferon-induced 35 kDa protein from Homo sapiens (Human).